We begin with the raw amino-acid sequence, 358 residues long: C-X-C chemokine receptor type 4-B (358 aa).

An important for chemokine binding and signaling region spans residues 1 to 25 (MDGFSGGIDINIFDGNSTENGSGDF). At 1–44 (MDGFSGGIDINIFDGNSTENGSGDFEDFIEPCFMQENSDFNRIF) the chain is on the extracellular side. N-linked (GlcNAc...) asparagine glycans are attached at residues N16 and N20. Disulfide bonds link C32–C281 and C113–C190. A helical transmembrane segment spans residues 45–67 (LPTIYSFIFLLGIIGNGLVVVVM). Residues 68–81 (GYQKKSRTMTDKYR) are Cytoplasmic-facing. A helical membrane pass occupies residues 82–103 (LHLSVADLLFVFTLPFWSVDAA). A chemokine binding region spans residues 98-101 (WSVD). Over 104–114 (IGWYFKEFLCK) the chain is Extracellular. The chain crosses the membrane as a helical span at residues 115–134 (AVHVIYTVNLYSSVLILAFI). Residues 117–121 (HVIYT) form a chemokine binding region. The Cytoplasmic portion of the chain corresponds to 135–158 (SLDRYLAIVHATNSQGSRKMLADK). Positions 139–151 (YLAIVHATNSQGS) are involved in dimerization; when bound to chemokine. Residues 159–178 (VVYAGVWLPALLLTVPDLVF) form a helical membrane-spanning segment. At 179 to 202 (ASVSNENGQFVCDRIYPIDNRETW) the chain is on the extracellular side. The interval 190–194 (CDRIY) is chemokine binding, important for signaling. A helical transmembrane segment spans residues 203–223 (TVGFRFLHITVGLILPGLIIL). The Cytoplasmic portion of the chain corresponds to 224–248 (VCYCVIISKLSHSKGHQKRKALKTT). The chain crosses the membrane as a helical span at residues 249-268 (VILILAFFACWLPYYVCLTT). Topologically, residues 269–289 (DTFMMLGLVKADCIWENTLHK) are extracellular. The helical transmembrane segment at 290–309 (AISITEALAFFHCCLNPILY) threads the bilayer. Residues 310 to 358 (AFLGAKFKKSAQNAFTSVSRGSSLKILSKKRAGLSSVSTESESSSFHSS) lie on the Cytoplasmic side of the membrane. The segment at 338 to 358 (KKRAGLSSVSTESESSSFHSS) is disordered. Positions 344-358 (SSVSTESESSSFHSS) are enriched in low complexity.

This sequence belongs to the G-protein coupled receptor 1 family. Monomer. Can form dimers. Post-translationally, sulfation is required for efficient binding of cxcl12/sdf-1alpha and promotes its dimerization. In terms of processing, O- and N-glycosylated.

The protein localises to the cell membrane. It is found in the cytoplasm. Its subcellular location is the nucleus. It localises to the early endosome. The protein resides in the late endosome. The protein localises to the lysosome. Functionally, receptor for the C-X-C chemokine cxcl12/sdf-1. Transduces a signal by increasing the intracellular level of calcium ions. Signaling with cxcl12/sdf-1 mediates the directional movement of mesodermal cells during gastrulation. May play a role in the migration of embryonic presumptive primordial germ cells (pPGCs). May also be involved in regulating migration of hematopoietic stem cells into the larval liver. This is C-X-C chemokine receptor type 4-B (cxcr4-b) from Xenopus laevis (African clawed frog).